We begin with the raw amino-acid sequence, 105 residues long: Large ribosomal subunit protein uL24 (105 aa).

The protein belongs to the universal ribosomal protein uL24 family. Part of the 50S ribosomal subunit.

One of two assembly initiator proteins, it binds directly to the 5'-end of the 23S rRNA, where it nucleates assembly of the 50S subunit. Functionally, one of the proteins that surrounds the polypeptide exit tunnel on the outside of the subunit. The chain is Large ribosomal subunit protein uL24 from Leptothrix cholodnii (strain ATCC 51168 / LMG 8142 / SP-6) (Leptothrix discophora (strain SP-6)).